Reading from the N-terminus, the 335-residue chain is Nucleoid-associated protein YejK (335 aa).

This sequence belongs to the YejK family.

Its subcellular location is the cytoplasm. It is found in the nucleoid. The chain is Nucleoid-associated protein YejK from Shigella flexneri.